The chain runs to 295 residues: Pyridoxal 5'-phosphate synthase subunit PdxS (295 aa).

Residue D25 participates in D-ribose 5-phosphate binding. K82 acts as the Schiff-base intermediate with D-ribose 5-phosphate in catalysis. G154 lines the D-ribose 5-phosphate pocket. R166 is a D-glyceraldehyde 3-phosphate binding site. D-ribose 5-phosphate-binding positions include G215 and 236–237 (GS).

Belongs to the PdxS/SNZ family. In the presence of PdxT, forms a dodecamer of heterodimers.

It carries out the reaction aldehydo-D-ribose 5-phosphate + D-glyceraldehyde 3-phosphate + L-glutamine = pyridoxal 5'-phosphate + L-glutamate + phosphate + 3 H2O + H(+). The protein operates within cofactor biosynthesis; pyridoxal 5'-phosphate biosynthesis. In terms of biological role, catalyzes the formation of pyridoxal 5'-phosphate from ribose 5-phosphate (RBP), glyceraldehyde 3-phosphate (G3P) and ammonia. The ammonia is provided by the PdxT subunit. Can also use ribulose 5-phosphate and dihydroxyacetone phosphate as substrates, resulting from enzyme-catalyzed isomerization of RBP and G3P, respectively. This chain is Pyridoxal 5'-phosphate synthase subunit PdxS, found in Listeria innocua serovar 6a (strain ATCC BAA-680 / CLIP 11262).